The primary structure comprises 71 residues: Ranatuerin-2PLa (71 aa).

The first 22 residues, 1–22 (MFTTKKSMLLFFFLGTISLSLC), serve as a signal peptide directing secretion. A propeptide spanning residues 23–41 (EQERGADEDDGVEMTEEEV) is cleaved from the precursor. A disulfide bridge connects residues Cys-66 and Cys-71.

Expressed by the skin glands.

It localises to the secreted. In terms of biological role, may have antimicrobial activity against the Gram-negative bacterium E.coli. The chain is Ranatuerin-2PLa from Lithobates palustris (Pickerel frog).